We begin with the raw amino-acid sequence, 255 residues long: Cyclic di-GMP phosphodiesterase PdeH (255 aa).

An EAL domain is found at 13 to 255 (EASIESLQER…ETLNTAVLAL (243 aa)).

It carries out the reaction 3',3'-c-di-GMP + H2O = 5'-phosphoguanylyl(3'-&gt;5')guanosine + H(+). Functionally, involved in the control of the switch from cell motility to adhesion via regulation of cellular levels of cyclic-di-GMP (c-di-GMP). Part of a signaling cascade that regulates curli biosynthesis. The cascade is composed of two c-di-GMP control modules, in which c-di-GMP controlled by the DgcE/PdeH pair (module I) regulates the activity of the DgcM/PdeR pair (module II), which in turn regulates activity of the transcription factor MlrA and expression of the master biofilm regulator csgD. Effect on flagella is controlled via the c-di-GMP-binding flagellar brake protein YcgR. The sequence is that of Cyclic di-GMP phosphodiesterase PdeH from Escherichia coli (strain K12).